We begin with the raw amino-acid sequence, 332 residues long: Pyrroline-5-carboxylate reductase (332 aa).

The protein belongs to the pyrroline-5-carboxylate reductase family.

It carries out the reaction L-proline + NADP(+) = (S)-1-pyrroline-5-carboxylate + NADPH + 2 H(+). It catalyses the reaction L-proline + NAD(+) = (S)-1-pyrroline-5-carboxylate + NADH + 2 H(+). The protein operates within amino-acid biosynthesis; L-proline biosynthesis; L-proline from L-glutamate 5-semialdehyde: step 1/1. The chain is Pyrroline-5-carboxylate reductase (pro-1) from Neurospora crassa (strain ATCC 24698 / 74-OR23-1A / CBS 708.71 / DSM 1257 / FGSC 987).